Reading from the N-terminus, the 433-residue chain is Probable M18 family aminopeptidase 2 (433 aa).

Histidine 79, histidine 153, and histidine 404 together coordinate Zn(2+).

The protein belongs to the peptidase M18 family. It depends on Zn(2+) as a cofactor.

In Mycobacterium bovis (strain ATCC BAA-935 / AF2122/97), this protein is Probable M18 family aminopeptidase 2 (apeB).